The following is a 210-amino-acid chain: tRNA (guanine-N(7)-)-methyltransferase (210 aa).

Residues glutamate 36, glutamate 61, aspartate 90, and aspartate 112 each contribute to the S-adenosyl-L-methionine site. Aspartate 112 is an active-site residue. Residues lysine 116, aspartate 148, and 188–191 (TEYE) each bind substrate.

Belongs to the class I-like SAM-binding methyltransferase superfamily. TrmB family.

It carries out the reaction guanosine(46) in tRNA + S-adenosyl-L-methionine = N(7)-methylguanosine(46) in tRNA + S-adenosyl-L-homocysteine. It participates in tRNA modification; N(7)-methylguanine-tRNA biosynthesis. In terms of biological role, catalyzes the formation of N(7)-methylguanine at position 46 (m7G46) in tRNA. In Mycoplasma genitalium (strain ATCC 33530 / DSM 19775 / NCTC 10195 / G37) (Mycoplasmoides genitalium), this protein is tRNA (guanine-N(7)-)-methyltransferase.